The primary structure comprises 318 residues: Deacetoxycephalosporin C hydroxylase (318 aa).

The Fe2OG dioxygenase domain occupies 158–271 (DADPVLRLRY…RTSSVFFLRP (114 aa)).

The protein belongs to the iron/ascorbate-dependent oxidoreductase family. Monomer. The cofactor is Fe cation.

It catalyses the reaction deacetoxycephalosporin C + 2-oxoglutarate + O2 = deacetylcephalosporin C + succinate + CO2. It functions in the pathway antibiotic biosynthesis; cephalosporin C biosynthesis. Its function is as follows. Hydroxylation of desacetoxicephalosporin C in 3'position to form deacetylcephalosporin C. In Streptomyces clavuligerus, this protein is Deacetoxycephalosporin C hydroxylase (cefF).